We begin with the raw amino-acid sequence, 1342 residues long: MVYSYSEKKRIRKDFGKRPQVLDIPYLLSIQLDSFKKFTDQDPTGERGLEAAFRSVFPIKSFSGNSELQYVSYKLGEPVFDVKECQIRGVTYSAPLRVKLRMVLFDREAAPGTVKDIKEQEVYMGDIPLMTENGTFVINGTERVIVSQLHRSPGVFFDHDRGKTHSSGKVLYNARIIPYRGSWLDFEFDPKDALFVRIDRRRKLPATIILRALDFSTQDILDIFFERVDFTIKKDSLVMKLLPERLRGETASYDIKDAEGNIVVEKGRRITARHIRQLEKTNTTELEVPVEYIVGKIAAQDYIDPDTGEVLVTANNEIRLEDLAQLSLAGIKDISTLYINELDHGAYISDTLRIDSTTNRLEALVEIYRMMRPGEPPTKDAAEALFQNLFFSEERYDLSKVGRMKFNRRLEIADDVGTGVLSNDDIVAVMKKIIEIRNGNDEVDDIDHLGNRRIRSVGEMAENQFRVGLVRVERAVRERLSLGDLNELMPQDLINAKPISAAVKEFFGSSQLSQFMDQNNPLSEVTHKRRISALGPGGLTRERAGFEVRDVHPTHYGRLCPIETPEGPNIGLINSLATFARTNSYGFLETPYRKVVDGVVTDDVEYLSAIEEGRYVIAQANIELDGEGRILEEQVACRHKGESTFMRASDIQYMDVSPQQIISVAASLIPFLEHDDANRALMGANMQRQAVPTLRSEKPLVGTGIERALAVDSGVVVAAKRGGVIDYVDASRIVVKVNEDELRPGEAGIDIYNLTKYTRSNQNTCINQRPCCQVGDPIVRGDVLADGPSTDLGDLALGQNMRVAFMPWNGYNFEDSILISERVVQDDRFTTIHIQELSCIARDTKLGSEEITADIPNVGESALSKLDESGIVYIGAEVKGGDILVGKVTPKGETQLTPEEKLLRAIFGEKASDVKDSSLRVPNSVTGTVIDVQVFTRDGVEKDKRAIEIEEMHIAQARKDLSEEFKILEEGVLSRARNLLLAGGYTQAQLDAIPRKELLTQVIDDETKQTELEQLAEQHEELKADFDKKFEHKRRKITQGDDLAPGVLKIVKVYLAVKRTIQPGDKMAGRHGNKGVISKICPIEDMPYDEQGNPVDIVLNPLGVPSRMNIGQVLEVHMGAAAKGIGNRIQAMLEEQREVAELRGYIKQAYDLGETQQKVDIESFTDEEVIRLAKHLKDGLPTATPAFDGAKEKEIKQMLELAGLPTSGQLRLFDGRTGNAFEREVTVGYMYMLKLNHLVDDKMHARSTGSYSLVTQQPLGGKAQFGGQRFGEMEVWALEAYGAAYTLQEMLTVKSDDVNGRTQMYKNIVDGNHQMQPGMPESFNVLLKEIRSLGINIELDQE.

This sequence belongs to the RNA polymerase beta chain family. As to quaternary structure, the RNAP catalytic core consists of 2 alpha, 1 beta, 1 beta' and 1 omega subunit. When a sigma factor is associated with the core the holoenzyme is formed, which can initiate transcription.

It carries out the reaction RNA(n) + a ribonucleoside 5'-triphosphate = RNA(n+1) + diphosphate. Its function is as follows. DNA-dependent RNA polymerase catalyzes the transcription of DNA into RNA using the four ribonucleoside triphosphates as substrates. The protein is DNA-directed RNA polymerase subunit beta of Shewanella amazonensis (strain ATCC BAA-1098 / SB2B).